The sequence spans 398 residues: Argininosuccinate synthase (398 aa).

Residue 9–17 (AYSGGLDTS) participates in ATP binding. Tyr85 is an L-citrulline binding site. Gly115 lines the ATP pocket. 3 residues coordinate L-aspartate: Thr117, Asn121, and Asp122. An L-citrulline-binding site is contributed by Asn121. Residues Arg125, Ser173, Glu258, and Tyr270 each contribute to the L-citrulline site.

It belongs to the argininosuccinate synthase family. Type 1 subfamily. As to quaternary structure, homotetramer.

The protein resides in the cytoplasm. It carries out the reaction L-citrulline + L-aspartate + ATP = 2-(N(omega)-L-arginino)succinate + AMP + diphosphate + H(+). It participates in amino-acid biosynthesis; L-arginine biosynthesis; L-arginine from L-ornithine and carbamoyl phosphate: step 2/3. This Streptococcus pneumoniae (strain Hungary19A-6) protein is Argininosuccinate synthase.